Here is a 750-residue protein sequence, read N- to C-terminus: MMRQYELVERVQRYKPDVNEALLNKAYVYAMQKHRSQKRASGDPYFSHPLEVAAILTDMHLDEATIAIALLHDTIEDTTATRQEIDQLFGPEIGKLVEGLTKLKKLDLVSKKAVQAENLRKLLLAISEDVRVLLVKLADRLHNMRTLGVMREDKRLRIAEETMDIYAPLAGRMGMQDMREELEELAFRYINPDAWRAVTDRLAELLEKNRGLLQKIETDLSEIFEKNGIKASVKSRQKKPWSVFRKMESKGLSFEQLSDIFGFRVMVDTVQDCYRALGLIHTTWSMVPGRFKDYISTPKQNDYRSIHTTIIGPSRQRIELQIRTREMDEIAEFGVAAHSIYKDRGSANNPHKISTETNAYAWLRQTIEQLSEGDNPEEFLEHTKLELFQDQVFCFTPKGRLIALPRGATPIDFAYAVHTDIGDSCVGAKVNGRIMPLMTELKNGDEVDIIRSKAQVPPAAWESLVATGKARAAIRRATRSAVRKQYSGLGMRILERAFERAGKPFSKDILKPGLPRLARKDVEDVLAAVGRGELPSTDVVKAVYPDYQDTRVTTQNNPAKAGEKGWFNIQNAAGMIFKVPEGGEGAAAKVDPAATTPKPGKRALPIRGTNPDLPVRFAPEGAVPGDRIVGILQPGAGITIYPIQSPALTAYDDQPERWIDVRWDIDDQMSERFPARISVSAINSPGSLAEIAQIAAANDANIHNLSMVRTAPDFTEMIIDVEVWDLKHLNRIISQLKESASVSSAKRVNG.

In terms of domain architecture, HD spans 45–144 (YFSHPLEVAA…VKLADRLHNM (100 aa)). One can recognise a TGS domain in the interval 390–451 (DQVFCFTPKG…KNGDEVDIIR (62 aa)). The tract at residues 587 to 613 (AAKVDPAATTPKPGKRALPIRGTNPDL) is disordered. The 75-residue stretch at 676 to 750 (RISVSAINSP…SVSSAKRVNG (75 aa)) folds into the ACT domain.

Belongs to the RelA/SpoT family.

It carries out the reaction GTP + ATP = guanosine 3'-diphosphate 5'-triphosphate + AMP. Its function is as follows. Functions as a (p)ppGpp synthase. In eubacteria ppGpp (guanosine 3'-diphosphate 5'-diphosphate) is a mediator of the stringent response that coordinates a variety of cellular activities in response to changes in nutritional abundance. It is necessary for persistence in mice, essential for intracellular growth of Brucella and required for expression of the type IV secretion system VirB and therefore plays a role in adaptation of Brucella to its intracellular host environment. The protein is GTP pyrophosphokinase rsh (rsh) of Brucella melitensis biotype 1 (strain ATCC 23456 / CCUG 17765 / NCTC 10094 / 16M).